The primary structure comprises 413 residues: Cyclic AMP-dependent transcription factor ATF-7 (413 aa).

Positions 1 to 285 are transactivation domain; the sequence is MGDDRPFVCS…GMVVGTASTM (285 aa). Residues 7–31 form a C2H2-type zinc finger; sequence FVCSAPGCGQRFTNEDHLAVHKHKH. At threonine 51 the chain carries Phosphothreonine; by MAPK11. 2 positions are modified to phosphothreonine: threonine 53 and threonine 101. Disordered stretches follow at residues 81 to 140 and 299 to 337; these read ASDD…TTKP and HPDA…RRQR. A Glycyl lysine isopeptide (Lys-Gly) (interchain with G-Cter in SUMO1) cross-link involves residue lysine 107. Composition is skewed to low complexity over residues 114-126 and 307-320; these read VDSS…ASSP and QPQV…PSTG. Residues 326 to 337 are compositionally biased toward basic and acidic residues; sequence TVDEDPDERRQR. One can recognise a bZIP domain in the interval 332 to 395; sequence DERRQRFLER…AQLKQLLLAH (64 aa). The basic motif stretch occupies residues 334 to 354; sequence RRQRFLERNRAAASRCRQKRK. Residues 360-388 are leucine-zipper; sequence LEKKAEELTSQNIQLSNEVTLLRNEVAQL.

Belongs to the bZIP family. Homodimer; binds DNA as homodimer. Heterodimer; heterodimerizes with other members of ATF family and with JUN family members. Interacts with JNK2; the interaction does not phosphorylate ATF7 but acts as a docking site for other ATF-associated partners such as JUN family members. Interacts (via its transactivation domain) with TAF12 the interaction potentiates the transactivation activity and is inhibited by ATF7 sumoylation. Interacts with TAF4; the interaction inhibits the TAF12-dependent transactivation. Interacts with MAPK9; the interaction does not phosphorylate ATF7 but acts as a docking site for ATF7-associated partners such as JUN. Interacts with Ku complex components XRCC6 and XRCC7. Interacts with TERT. In terms of processing, on EGF stimulation, phosphorylated first on Thr-53 allowing subsequent phosphorylation on Thr-51. This latter phosphorylation prevents sumoylation, increases binding to TAF12 and enhances transcriptional activity. Social isolation stress as well as TNF-alpha also induce the phosphorylation of ATF7. Phosphorylated in proliferating colonic and small intestinal epithelial cells. Post-translationally, sumoylation delays nuclear localization and inhibits transactivation activity through preventing binding to TAF12. RANBP2 appears to be the specific E3 ligase.

The protein localises to the nucleus. It is found in the nucleoplasm. It localises to the chromosome. Its subcellular location is the telomere. Its function is as follows. Stress-responsive chromatin regulator that plays a role in various biological processes including innate immunological memory, adipocyte differentiation or telomerase regulation. In absence of stress, contributes to the formation of heterochromatin and heterochromatin-like structure by recruiting histone H3K9 tri- and di-methyltransferases thus silencing the transcription of target genes such as Htr5b, STAT1 in adipocytes, or genes involved in innate immunity in macrophages and adipocytes. Phosphorylation of ATF7 disrupts interactions with histone methyltransferase and enhances the association with coactivators containing histone acetyltransferase and/or histone demethylase, leading to disruption of the heterochromatin-like structure and subsequently transcriptional activation. In response to TNF-alpha, which is induced by various stresses, phosphorylated ATF7 and telomerase are released from telomeres leading to telomere shortening. Also plays a role in maintaining epithelial regenerative capacity and protecting against cell death during intestinal epithelial damage and repair. In Mus musculus (Mouse), this protein is Cyclic AMP-dependent transcription factor ATF-7 (Atf7).